We begin with the raw amino-acid sequence, 166 residues long: Large ribosomal subunit protein mL49 (166 aa).

The protein belongs to the mitochondrion-specific ribosomal protein mL49 family. In terms of assembly, component of the mitochondrial ribosome large subunit (39S) which comprises a 16S rRNA and about 50 distinct proteins. Interacts with OXA1L.

The protein localises to the mitochondrion. The polypeptide is Large ribosomal subunit protein mL49 (MRPL49) (Bos taurus (Bovine)).